Consider the following 209-residue polypeptide: Large ribosomal subunit protein uL3 (209 aa).

The tract at residues 128 to 156 is disordered; the sequence is FAGGSRTHGQSDRLRAPGSVGGSSDPSRT.

It belongs to the universal ribosomal protein uL3 family. As to quaternary structure, part of the 50S ribosomal subunit. Forms a cluster with proteins L14 and L19.

Functionally, one of the primary rRNA binding proteins, it binds directly near the 3'-end of the 23S rRNA, where it nucleates assembly of the 50S subunit. In Prosthecochloris aestuarii (strain DSM 271 / SK 413), this protein is Large ribosomal subunit protein uL3.